Reading from the N-terminus, the 1176-residue chain is Myosin light chain kinase, smooth muscle (1176 aa).

The tract at residues 1 to 41 (MDFRANLQRQVKPKTLSEEERKVHGPQQVDFRSVLAKKGTP) is actin-binding (calcium/calmodulin-sensitive). Residues 1–354 (MDFRANLQRQ…SEKRPESRGT (354 aa)) are disordered. The segment at 26–41 (PQQVDFRSVLAKKGTP) is calmodulin-binding. Residues 43–55 (TPVPEKVPPPKPA) are compositionally biased toward pro residues. Tandem repeats lie at residues 100–111 (FLKPVGNAKLAD), 112–123 (TPKPLSSTKPAE), 124–135 (TPKPLGNVKPAE), 136–147 (TPKPLGSTKPAE), 148–159 (TPKPLGSTKPAE), 160–171 (TPKPLGNVKPAE), 172–183 (TPKPLGNIKPTE), 184–195 (TPKPLGSTKPAE), 196–207 (TPKPLGSTKPAE), 208–219 (TPKPLGNVKPAE), 220–231 (TPKPLGNVKPAE), 232–243 (TPKPLGNVKPAE), 244–255 (TPKPVSNAKPAE), 256–267 (TLKPVGNAKPAE), 268–279 (TPKPLSNVKPAE), and 280–291 (TPKLVGNAKPAE). The interval 100–291 (FLKPVGNAKL…KLVGNAKPAE (192 aa)) is 16 X 12 AA tandem repeats. S202 is modified (phosphoserine). The tract at residues 319–721 (PTGKEELKKE…TVTVNTEQKV (403 aa)) is actin-binding (calcium/calmodulin-insensitive). The segment covering 320 to 335 (TGKEELKKEIKNDVNC) has biased composition (basic and acidic residues). Residues 356-444 (PTFEEKLQDL…GQAESSCQVT (89 aa)) enclose the Ig-like C2-type 1 domain. C377 and C428 form a disulfide bridge. The segment at 448-497 (PDAPTSENAKAPEMKARRPKSSLPPVLGTESDATVKKKPAPKTPPKAAMP) is disordered. Residues 498–586 (PQIIQFPEDQ…GSRQAQVNLT (89 aa)) enclose the Ig-like C2-type 2 domain. Residues 594–686 (PAGTPCASDI…QESELTALGE (93 aa)) form the Fibronectin type-III domain. Residues 673-707 (SEPSQESELTALGEKPEEEPKDEVEVSDDDEKEPE) are disordered. Over residues 688 to 706 (PEEEPKDEVEVSDDDEKEP) the composition is skewed to acidic residues. Phosphoserine is present on S699. Y710 is subject to Phosphotyrosine; by ABL1. Residues 725 to 980 (YDIEERLGSG…CTQCLQHPWL (256 aa)) enclose the Protein kinase domain. ATP-binding positions include 731-739 (LGSGKFGQV) and K754. The residue at position 836 (Y836) is a Phosphotyrosine; by ABL1. The active-site Proton acceptor is D846. Position 896 is a phosphotyrosine; by ABL1 (Y896). Residues 972-1035 (TQCLQHPWLM…SGLSGRKSST (64 aa)) are calmodulin-binding. S1020, S1021, S1033, S1034, and S1037 each carry phosphoserine. T1039 carries the post-translational modification Phosphothreonine. S1040 carries the phosphoserine modification. Positions 1069–1158 (PYFSKTIRDL…GEATCTAELI (90 aa)) constitute an Ig-like C2-type 3 domain. Residues C1090 and C1142 are joined by a disulfide bond.

The protein belongs to the protein kinase superfamily. CAMK Ser/Thr protein kinase family. All isoforms including Telokin bind calmodulin. Interacts with SVIL. Interacts with CTTN; this interaction is reduced during thrombin-induced endothelial cell (EC) contraction but is promoted by the barrier-protective agonist sphingosine 1-phosphate (S1P) within lamellipodia. A complex made of ABL1, CTTN and MYLK regulates cortical actin-based cytoskeletal rearrangement critical to sphingosine 1-phosphate (S1P)-mediated endothelial cell (EC) barrier enhancement. Binds to NAA10/ARD1 and PTK2B/PYK2. Requires Mg(2+) as cofactor. The cofactor is Ca(2+). Post-translationally, the C-terminus is deglutamylated by AGTPBP1/CCP1, AGBL1/CCP4 and AGBL4/CCP6, leading to the formation of Myosin light chain kinase, smooth muscle, deglutamylated form. The consequences of C-terminal deglutamylation are unknown. Can probably be down-regulated by phosphorylation. Tyrosine phosphorylation by ABL1 increases kinase activity, reverses MLCK-mediated inhibition of Arp2/3-mediated actin polymerization, and enhances CTTN-binding. Phosphorylation by SRC promotes CTTN binding.

It is found in the cytoplasm. The protein localises to the cell projection. The protein resides in the lamellipodium. It localises to the cleavage furrow. Its subcellular location is the cytoskeleton. It is found in the stress fiber. The enzyme catalyses L-seryl-[myosin light chain] + ATP = O-phospho-L-seryl-[myosin light chain] + ADP + H(+). It catalyses the reaction L-threonyl-[myosin light chain] + ATP = O-phospho-L-threonyl-[myosin light chain] + ADP + H(+). Functionally, calcium/calmodulin-dependent myosin light chain kinase implicated in smooth muscle contraction via phosphorylation of myosin light chains (MLC). Also regulates actin-myosin interaction through a non-kinase activity. Phosphorylates PTK2B/PYK2 and myosin light-chains. Involved in the inflammatory response (e.g. apoptosis, vascular permeability, leukocyte diapedesis), cell motility and morphology, airway hyperreactivity and other activities relevant to asthma. Required for tonic airway smooth muscle contraction that is necessary for physiological and asthmatic airway resistance. Necessary for gastrointestinal motility. Implicated in the regulation of endothelial as well as vascular permeability, probably via the regulation of cytoskeletal rearrangements. In the nervous system it has been shown to control the growth initiation of astrocytic processes in culture and to participate in transmitter release at synapses formed between cultured sympathetic ganglion cells. Critical participant in signaling sequences that result in fibroblast apoptosis. Plays a role in the regulation of epithelial cell survival. Required for epithelial wound healing, especially during actomyosin ring contraction during purse-string wound closure. Mediates RhoA-dependent membrane blebbing. Triggers TRPC5 channel activity in a calcium-dependent signaling, by inducing its subcellular localization at the plasma membrane. Promotes cell migration (including tumor cells) and tumor metastasis. PTK2B/PYK2 activation by phosphorylation mediates ITGB2 activation and is thus essential to trigger neutrophil transmigration during acute lung injury (ALI). May regulate optic nerve head astrocyte migration. Probably involved in mitotic cytoskeletal regulation. Regulates tight junction probably by modulating ZO-1 exchange in the perijunctional actomyosin ring. Mediates burn-induced microvascular barrier injury; triggers endothelial contraction in the development of microvascular hyperpermeability by phosphorylating MLC. Essential for intestinal barrier dysfunction. Mediates Giardia spp.-mediated reduced epithelial barrier function during giardiasis intestinal infection via reorganization of cytoskeletal F-actin and tight junctional ZO-1. Necessary for hypotonicity-induced Ca(2+) entry and subsequent activation of volume-sensitive organic osmolyte/anion channels (VSOAC) in cervical cancer cells. The polypeptide is Myosin light chain kinase, smooth muscle (MYLK) (Bos taurus (Bovine)).